Reading from the N-terminus, the 498-residue chain is Membrane-bound lytic murein transglycosylase F (498 aa).

Positions 1–29 (MFFKPDFRPRCAKWLIATGLFLMLGACVE) are cleaved as a signal peptide. Residues 30 to 267 (KPTTLERVKE…RLKDRYYGHV (238 aa)) form a non-LT domain region. The segment at 268 to 498 (DVLGYVGAYT…SSSSTDESPL (231 aa)) is LT domain. Residue Glu314 is part of the active site. The interval 464–498 (VADGNLHVPGVDKTQPPVPPASPVPSSSSTDESPL) is disordered.

It in the N-terminal section; belongs to the bacterial solute-binding protein 3 family. The protein in the C-terminal section; belongs to the transglycosylase Slt family.

It is found in the cell outer membrane. The catalysed reaction is Exolytic cleavage of the (1-&gt;4)-beta-glycosidic linkage between N-acetylmuramic acid (MurNAc) and N-acetylglucosamine (GlcNAc) residues in peptidoglycan, from either the reducing or the non-reducing ends of the peptidoglycan chains, with concomitant formation of a 1,6-anhydrobond in the MurNAc residue.. In terms of biological role, murein-degrading enzyme that degrades murein glycan strands and insoluble, high-molecular weight murein sacculi, with the concomitant formation of a 1,6-anhydromuramoyl product. Lytic transglycosylases (LTs) play an integral role in the metabolism of the peptidoglycan (PG) sacculus. Their lytic action creates space within the PG sacculus to allow for its expansion as well as for the insertion of various structures such as secretion systems and flagella. The chain is Membrane-bound lytic murein transglycosylase F from Pseudomonas syringae pv. syringae (strain B728a).